The primary structure comprises 470 residues: V-type ATP synthase beta chain (470 aa).

This sequence belongs to the ATPase alpha/beta chains family.

Produces ATP from ADP in the presence of a proton gradient across the membrane. The V-type beta chain is a regulatory subunit. This chain is V-type ATP synthase beta chain, found in Deinococcus geothermalis (strain DSM 11300 / CIP 105573 / AG-3a).